A 48-amino-acid chain; its full sequence is MPQLIPFFFFNQVVFTLISLSFIFFVFSKYILPWIVRLYVSRNQYNSL.

A helical membrane pass occupies residues 13-32 (VVFTLISLSFIFFVFSKYIL).

This sequence belongs to the ATPase protein 8 family. In terms of assembly, F-type ATPases have 2 components, CF(1) - the catalytic core - and CF(0) - the membrane proton channel.

It is found in the mitochondrion membrane. In terms of biological role, mitochondrial membrane ATP synthase (F(1)F(0) ATP synthase or Complex V) produces ATP from ADP in the presence of a proton gradient across the membrane which is generated by electron transport complexes of the respiratory chain. F-type ATPases consist of two structural domains, F(1) - containing the extramembraneous catalytic core and F(0) - containing the membrane proton channel, linked together by a central stalk and a peripheral stalk. During catalysis, ATP synthesis in the catalytic domain of F(1) is coupled via a rotary mechanism of the central stalk subunits to proton translocation. Part of the complex F(0) domain. Minor subunit located with subunit a in the membrane. In Trichophyton rubrum (Athlete's foot fungus), this protein is ATP synthase protein 8 (ATP8).